The primary structure comprises 196 residues: MVKSFYGYVRDAWKNPDETYVNELRWERLQVWRKQGSVTRIERPTRIDRARSLGYKAKQGIVVVRVNVRRGGLGHVRPNRGRRTQKMGKNKVSGGMSIQRIAEARADRKYPNLEVLNSYWVGEDGKHKWFEVILVDPHHPVIKSDKNLNWICDASIRGRATRGKTSAGRKGRGMSTRGKGTEKTRPSIRAHKSRGK.

2 stretches are compositionally biased toward basic residues: residues 160 to 172 (ATRGKTSAGRKGR) and 186 to 196 (PSIRAHKSRGK). The disordered stretch occupies residues 160 to 196 (ATRGKTSAGRKGRGMSTRGKGTEKTRPSIRAHKSRGK).

It belongs to the eukaryotic ribosomal protein eL15 family.

This Methanosarcina mazei (strain ATCC BAA-159 / DSM 3647 / Goe1 / Go1 / JCM 11833 / OCM 88) (Methanosarcina frisia) protein is Large ribosomal subunit protein eL15 (rpl15e).